The primary structure comprises 681 residues: Oligopeptidase A (681 aa).

Residue H470 coordinates Zn(2+). E471 is an active-site residue. Positions 474 and 477 each coordinate Zn(2+).

Belongs to the peptidase M3 family. It depends on Zn(2+) as a cofactor.

It catalyses the reaction Hydrolysis of oligopeptides, with broad specificity. Gly or Ala commonly occur as P1 or P1' residues, but more distant residues are also important, as is shown by the fact that Z-Gly-Pro-Gly-|-Gly-Pro-Ala is cleaved, but not Z-(Gly)(5).. May play a specific role in the degradation of signal peptides after they are released from precursor forms of secreted proteins. Can cleave N-acetyl-L-Ala(4). This is Oligopeptidase A (prlC) from Haemophilus influenzae (strain ATCC 51907 / DSM 11121 / KW20 / Rd).